The sequence spans 260 residues: Protein TONNEAU 1a (260 aa).

A LisH domain is found at Ser-73–Lys-105. Disordered stretches follow at residues Thr-147–Thr-224 and Asp-236–Asp-260. Low complexity predominate over residues Glu-161 to Ser-175. Positions Asn-248–Asp-260 are enriched in basic and acidic residues.

Interacts with CEN1, LNG1/TRM2 and LNG2/TRM1 (via C-terminus).

It localises to the cytoplasm. The protein resides in the cytoskeleton. Its function is as follows. Involved in the control of the dynamic organization of the cortical cytoskeleton. May play a role in the organization of microtubule arrays at the centrosome through interaction with centrin 1 (CEN1). In Arabidopsis thaliana (Mouse-ear cress), this protein is Protein TONNEAU 1a (TON1A).